We begin with the raw amino-acid sequence, 982 residues long: Protein lin-10 (982 aa).

The segment covering 1 to 16 (MSSEAVAQATAATTSP) has biased composition (polar residues). 5 disordered regions span residues 1 to 55 (MSSE…MIPP), 119 to 228 (QPAL…RTDS), 269 to 327 (TVAD…STVP), 432 to 511 (FAQQ…GTDD), and 525 to 593 (QREQ…SKET). A compositionally biased stretch (gly residues) spans 33-44 (KGGGAGGGGGGE). Residues 119–134 (QPALQQPRPSSQASSS) are compositionally biased toward low complexity. 2 stretches are compositionally biased toward polar residues: residues 143-156 (RQTA…NVSP) and 169-190 (ETSG…SSDV). Basic and acidic residues predominate over residues 211 to 228 (GEEKSEEKRKLSGDRTDS). The span at 301–318 (SLNQLRSSFNLPDDSTTV) shows a compositional bias: polar residues. 2 stretches are compositionally biased toward low complexity: residues 432–445 (FAQQ…APTP) and 454–464 (PSTSSGPSGAL). Over residues 490 to 501 (NGTSTSTTNGAQ) the composition is skewed to polar residues. Low complexity predominate over residues 539–550 (QEAATAAQEAAE). Residues 577 to 593 (GAERRGSVDKKKNSKET) are compositionally biased toward basic and acidic residues. Positions 604–788 (GVLFRARYLG…VLNSQELLGD (185 aa)) constitute a PID domain. PDZ domains are found at residues 801–886 (EVVV…TVVS) and 892–968 (EVRI…MPTS).

Interacts (via N-terminus) with egl-9 isoform e (via catalytic domain); the interaction regulates its trafficking; the interaction is direct. Interacts with rab-6.2 (in GTP-bound form). Post-translationally, phosphorylated on multiple Ser and Thr residues by cdk-5 which regulates its localization. In terms of processing, may be hydroxylated by egl-9 isoform e on multiple Pro residues which may prevent phosphorylation by cdk-5. In terms of tissue distribution, expressed in vulval epithelial cells and neurons.

It localises to the golgi apparatus. Its subcellular location is the golgi stack membrane. The protein localises to the trans-Golgi network membrane. The protein resides in the cytoplasm. It is found in the synapse. It localises to the perikaryon. In terms of biological role, required specifically for the determination of 3 vulval precursor cell fates P5.p, P6.p and P7.p during late second and early third larval stages; required for basolateral localization of receptor tyrosine kinase let-23. Could have a general but redundant role in development, functioning in diverse cell lineages to control cell fates. Regulates the trafficking of the glr-1 subunit of AMPA-type glutamate receptors (AMPRs) in the ventral nerve cord. This may be partly through interacting with the small GTPase rab-6.2 in its active GTP-bound state. The chain is Protein lin-10 from Caenorhabditis elegans.